Consider the following 339-residue polypeptide: 1-aminocyclopropane-1-carboxylate deaminase (339 aa).

Lysine 52 is modified (N6-(pyridoxal phosphate)lysine). Serine 79 (nucleophile) is an active-site residue.

The protein belongs to the ACC deaminase/D-cysteine desulfhydrase family. As to quaternary structure, homotrimer. Pyridoxal 5'-phosphate is required as a cofactor.

It carries out the reaction 1-aminocyclopropane-1-carboxylate + H2O = 2-oxobutanoate + NH4(+). In terms of biological role, catalyzes a cyclopropane ring-opening reaction, the irreversible conversion of 1-aminocyclopropane-1-carboxylate (ACC) to ammonia and alpha-ketobutyrate. Allows growth on ACC as a nitrogen source. The sequence is that of 1-aminocyclopropane-1-carboxylate deaminase from Bradyrhizobium sp. (strain ORS 278).